The sequence spans 191 residues: Adenine phosphoribosyltransferase (191 aa).

Belongs to the purine/pyrimidine phosphoribosyltransferase family. As to quaternary structure, homodimer.

It localises to the cytoplasm. The catalysed reaction is AMP + diphosphate = 5-phospho-alpha-D-ribose 1-diphosphate + adenine. Its pathway is purine metabolism; AMP biosynthesis via salvage pathway; AMP from adenine: step 1/1. Functionally, catalyzes a salvage reaction resulting in the formation of AMP, that is energically less costly than de novo synthesis. This Clavibacter sepedonicus (Clavibacter michiganensis subsp. sepedonicus) protein is Adenine phosphoribosyltransferase.